The following is a 101-amino-acid chain: Small ribosomal subunit protein bS18c (101 aa).

Belongs to the bacterial ribosomal protein bS18 family. Part of the 30S ribosomal subunit.

It is found in the plastid. It localises to the chloroplast. The polypeptide is Small ribosomal subunit protein bS18c (Citrus sinensis (Sweet orange)).